Consider the following 467-residue polypeptide: Serine/threonine-protein phosphatase 2A 56 kDa regulatory subunit epsilon isoform (467 aa).

Positions methionine 1–glutamine 39 are disordered. Position 2 is an N-acetylserine (serine 2). Threonine 7 is subject to Phosphothreonine. Positions lysine 20–arginine 29 are enriched in basic residues. Phosphoserine is present on residues serine 30, serine 32, and serine 34. Low complexity predominate over residues serine 30–glutamine 39.

Belongs to the phosphatase 2A regulatory subunit B56 family. In terms of assembly, PP2A consists of a common heterodimeric core enzyme, composed of a 36 kDa catalytic subunit (subunit C) and a 65 kDa constant regulatory subunit (PR65 or subunit A), that associates with a variety of regulatory subunits. Proteins that associate with the core dimer include three families of regulatory subunits B (the R2/B/PR55/B55, R3/B''/PR72/PR130/PR59 and R5/B'/B56 families), the 48 kDa variable regulatory subunit, viral proteins, and cell signaling molecules. Interacts with SGO1. Found in a complex with at least ARL2, PPP2CB; PPP2R1A, PPP2R2A, PPP2R5E and TBCD.

It localises to the cytoplasm. In terms of biological role, the B regulatory subunit might modulate substrate selectivity and catalytic activity, and might also direct the localization of the catalytic enzyme to a particular subcellular compartment. Interacts with cyclin G in vitro. The polypeptide is Serine/threonine-protein phosphatase 2A 56 kDa regulatory subunit epsilon isoform (Ppp2r5e) (Mus musculus (Mouse)).